A 370-amino-acid chain; its full sequence is MDVVRTAIGLMSGTSMDGIDVALIRTDGRGFIERGPFLGMPYDAEFRGRLKRALELARPLRDRNERPGELREIEQELTLRHATAVTAFLERFGLAANGVDVLGFHGQTVLHRPDEGLTIQIGDGRELARRTGLSVVYDMRANDMVHGGQGAPLVPAYHAALAGKFQQAGEAVCFVNIGGISNLTYIGADGRIAAFDSGPGNTLIDQWVEMQTGRTYDPGGEIGGRGKVVPALAQRYLDSPFFRGNVRRSLDRGDFAPLRPDEASLEDGARTLAHVAAASIVKSAGFLPERPSAYIVCGGGRLNGTLMAEFSAMAEGSRVLSAEAAGFDGDAMEAEAWAYLAVRSLDGLPLTFPGTTGVAAPVSGGVLATP.

Residue 13–20 participates in ATP binding; that stretch reads GTSMDGID.

This sequence belongs to the anhydro-N-acetylmuramic acid kinase family.

The enzyme catalyses 1,6-anhydro-N-acetyl-beta-muramate + ATP + H2O = N-acetyl-D-muramate 6-phosphate + ADP + H(+). The protein operates within amino-sugar metabolism; 1,6-anhydro-N-acetylmuramate degradation. Its pathway is cell wall biogenesis; peptidoglycan recycling. In terms of biological role, catalyzes the specific phosphorylation of 1,6-anhydro-N-acetylmuramic acid (anhMurNAc) with the simultaneous cleavage of the 1,6-anhydro ring, generating MurNAc-6-P. Is required for the utilization of anhMurNAc either imported from the medium or derived from its own cell wall murein, and thus plays a role in cell wall recycling. This chain is Anhydro-N-acetylmuramic acid kinase, found in Rhizobium etli (strain ATCC 51251 / DSM 11541 / JCM 21823 / NBRC 15573 / CFN 42).